A 312-amino-acid polypeptide reads, in one-letter code: Glycine--tRNA ligase alpha subunit (312 aa).

This sequence belongs to the class-II aminoacyl-tRNA synthetase family. As to quaternary structure, tetramer of two alpha and two beta subunits.

The protein localises to the cytoplasm. The catalysed reaction is tRNA(Gly) + glycine + ATP = glycyl-tRNA(Gly) + AMP + diphosphate. This Methylobacillus flagellatus (strain ATCC 51484 / DSM 6875 / VKM B-1610 / KT) protein is Glycine--tRNA ligase alpha subunit.